Here is a 651-residue protein sequence, read N- to C-terminus: Acid beta-fructofuranosidase (651 aa).

The Cytoplasmic portion of the chain corresponds to M1–D23. The propeptide at M1–E103 is removed in mature form. The helical; Signal-anchor for type II membrane protein transmembrane segment at L24–R44 threads the bilayer. The Lumenal portion of the chain corresponds to A45 to N651. A disordered region spans residues V48–H76. Residues S54–S72 show a composition bias toward polar residues. Substrate-binding positions include W127–D130, Q146, W154, and W189–T190. D130 is a catalytic residue. N-linked (GlcNAc...) asparagine glycosylation is present at N210. R253–D254 provides a ligand contact to substrate. N-linked (GlcNAc...) asparagine glycosylation is present at N275. Substrate is bound by residues E308 and D343. Cysteines 500 and 548 form a disulfide. N620 is a glycosylation site (N-linked (GlcNAc...) asparagine).

This sequence belongs to the glycosyl hydrolase 32 family. As to quaternary structure, may be present in two forms, a 70 kDa monomer and a heterodimer of the 30 kDa and 38 kDa subunits. The ratio of the levels of the two forms within cells appears to be regulated developmentally.

The protein resides in the membrane. It localises to the vacuole lumen. It catalyses the reaction Hydrolysis of terminal non-reducing beta-D-fructofuranoside residues in beta-D-fructofuranosides.. Its pathway is glycan biosynthesis; sucrose metabolism. The protein is Acid beta-fructofuranosidase of Phaseolus vulgaris (Kidney bean).